Reading from the N-terminus, the 242-residue chain is Beta-glucanase (242 aa).

An N-terminal signal peptide occupies residues 1 to 28 (MPYLKRVLLLLVTGLFMSLFAVTATASA). Q29 is subject to Pyrrolidone carboxylic acid. Residues 29-242 (QTGGSFFDPF…HYDWVRYTKK (214 aa)) form the GH16 domain. Residues C60 and C89 are joined by a disulfide bond. E133 (nucleophile) is an active-site residue. The active-site Proton donor is E137.

It belongs to the glycosyl hydrolase 16 family.

Its subcellular location is the secreted. The enzyme catalyses Hydrolysis of (1-&gt;4)-beta-D-glucosidic linkages in beta-D-glucans containing (1-&gt;3)- and (1-&gt;4)-bonds.. The chain is Beta-glucanase (bglS) from Bacillus subtilis (strain 168).